The following is a 431-amino-acid chain: Adenylosuccinate synthetase (431 aa).

GTP-binding positions include G12–K18 and G40–T42. D13 functions as the Proton acceptor in the catalytic mechanism. Residues D13 and G40 each coordinate Mg(2+). Residues D13 to K16, N38 to H41, T128, R142, Q223, T238, and R301 each bind IMP. H41 serves as the catalytic Proton donor. T297–R303 provides a ligand contact to substrate. Residues R303, S329 to D331, and S411 to G413 each bind GTP.

It belongs to the adenylosuccinate synthetase family. In terms of assembly, homodimer. Mg(2+) is required as a cofactor.

The protein resides in the cytoplasm. The catalysed reaction is IMP + L-aspartate + GTP = N(6)-(1,2-dicarboxyethyl)-AMP + GDP + phosphate + 2 H(+). The protein operates within purine metabolism; AMP biosynthesis via de novo pathway; AMP from IMP: step 1/2. In terms of biological role, plays an important role in the de novo pathway of purine nucleotide biosynthesis. Catalyzes the first committed step in the biosynthesis of AMP from IMP. The sequence is that of Adenylosuccinate synthetase from Lacticaseibacillus casei (strain BL23) (Lactobacillus casei).